Here is a 79-residue protein sequence, read N- to C-terminus: Acyl carrier protein (79 aa).

The region spanning 1–76 (MEVFEEVRDV…DVVTYIENLN (76 aa)) is the Carrier domain. S36 carries the O-(pantetheine 4'-phosphoryl)serine modification.

The protein belongs to the acyl carrier protein (ACP) family. Post-translationally, 4'-phosphopantetheine is transferred from CoA to a specific serine of apo-ACP by AcpS. This modification is essential for activity because fatty acids are bound in thioester linkage to the sulfhydryl of the prosthetic group.

The protein localises to the cytoplasm. Its pathway is lipid metabolism; fatty acid biosynthesis. Functionally, carrier of the growing fatty acid chain in fatty acid biosynthesis. The chain is Acyl carrier protein from Campylobacter hominis (strain ATCC BAA-381 / DSM 21671 / CCUG 45161 / LMG 19568 / NCTC 13146 / CH001A).